The chain runs to 460 residues: Tyrosine-protein phosphatase non-receptor type 18 (460 aa).

In terms of domain architecture, Tyrosine-protein phosphatase spans 26–291 (LAGEFSDIQA…RFLYHTVAQM (266 aa)). Substrate contacts are provided by residues D197, 229–235 (CSAGCGR), and Q276. Catalysis depends on C229, which acts as the Phosphocysteine intermediate. The tract at residues 361–460 (GAPAGAGSGT…RDPPAEWTRV (100 aa)) is disordered. Gly residues predominate over residues 364-378 (AGAGSGTQTGTGTGT). At Y389 the chain carries Phosphotyrosine. Residue T393 is modified to Phosphothreonine. Y426 is subject to Phosphotyrosine. Residues 449–460 (GPRDPPAEWTRV) are compositionally biased toward basic and acidic residues.

Belongs to the protein-tyrosine phosphatase family. Non-receptor class 4 subfamily. In terms of assembly, interacts with PSTPIP1. As to expression, expressed in brain, colon and several tumor-derived cell lines.

It is found in the nucleus. The protein resides in the cytoplasm. It catalyses the reaction O-phospho-L-tyrosyl-[protein] + H2O = L-tyrosyl-[protein] + phosphate. Its function is as follows. Differentially dephosphorylate autophosphorylated tyrosine kinases which are known to be overexpressed in tumor tissues. In Homo sapiens (Human), this protein is Tyrosine-protein phosphatase non-receptor type 18 (PTPN18).